The sequence spans 357 residues: tRNA N6-adenosine threonylcarbamoyltransferase (357 aa).

The Fe cation site is built by His-116 and His-120. Substrate contacts are provided by residues 139 to 143 (LVSGG), Asp-172, Gly-185, and Asn-284. Position 312 (Asp-312) interacts with Fe cation.

Belongs to the KAE1 / TsaD family. It depends on Fe(2+) as a cofactor.

Its subcellular location is the cytoplasm. The enzyme catalyses L-threonylcarbamoyladenylate + adenosine(37) in tRNA = N(6)-L-threonylcarbamoyladenosine(37) in tRNA + AMP + H(+). Functionally, required for the formation of a threonylcarbamoyl group on adenosine at position 37 (t(6)A37) in tRNAs that read codons beginning with adenine. Is involved in the transfer of the threonylcarbamoyl moiety of threonylcarbamoyl-AMP (TC-AMP) to the N6 group of A37, together with TsaE and TsaB. TsaD likely plays a direct catalytic role in this reaction. The chain is tRNA N6-adenosine threonylcarbamoyltransferase from Synechococcus sp. (strain CC9902).